Reading from the N-terminus, the 90-residue chain is Small ribosomal subunit protein bS16 (90 aa).

This sequence belongs to the bacterial ribosomal protein bS16 family.

The chain is Small ribosomal subunit protein bS16 from Bacillus pumilus (strain SAFR-032).